The chain runs to 338 residues: Ketol-acid reductoisomerase (NADP(+)) (338 aa).

One can recognise a KARI N-terminal Rossmann domain in the interval 1–181 (MKVFYDKDAD…GGGRAGIIET (181 aa)). Residues 24–27 (YGSQ), Arg47, and Ser52 each bind NADP(+). Residue His107 is part of the active site. Gly133 contacts NADP(+). The KARI C-terminal knotted domain occupies 182–327 (NFREETETDL…AKLRAMMPWI (146 aa)). 4 residues coordinate Mg(2+): Asp190, Glu194, Glu226, and Glu230. Residue Ser251 participates in substrate binding.

Belongs to the ketol-acid reductoisomerase family. It depends on Mg(2+) as a cofactor.

It catalyses the reaction (2R)-2,3-dihydroxy-3-methylbutanoate + NADP(+) = (2S)-2-acetolactate + NADPH + H(+). It carries out the reaction (2R,3R)-2,3-dihydroxy-3-methylpentanoate + NADP(+) = (S)-2-ethyl-2-hydroxy-3-oxobutanoate + NADPH + H(+). Its pathway is amino-acid biosynthesis; L-isoleucine biosynthesis; L-isoleucine from 2-oxobutanoate: step 2/4. It participates in amino-acid biosynthesis; L-valine biosynthesis; L-valine from pyruvate: step 2/4. Involved in the biosynthesis of branched-chain amino acids (BCAA). Catalyzes an alkyl-migration followed by a ketol-acid reduction of (S)-2-acetolactate (S2AL) to yield (R)-2,3-dihydroxy-isovalerate. In the isomerase reaction, S2AL is rearranged via a Mg-dependent methyl migration to produce 3-hydroxy-3-methyl-2-ketobutyrate (HMKB). In the reductase reaction, this 2-ketoacid undergoes a metal-dependent reduction by NADPH to yield (R)-2,3-dihydroxy-isovalerate. This Cupriavidus necator (strain ATCC 17699 / DSM 428 / KCTC 22496 / NCIMB 10442 / H16 / Stanier 337) (Ralstonia eutropha) protein is Ketol-acid reductoisomerase (NADP(+)).